The chain runs to 199 residues: Holliday junction branch migration complex subunit RuvA (199 aa).

Positions 1 to 64 (MIALLTGKLA…EDAINLYGFR (64 aa)) are domain I. Residues 65–143 (TQQEKELFQL…KLGLAQPQAG (79 aa)) are domain II. A flexible linker region spans residues 144-148 (GATAP). Residues 149–199 (AKQEIRDDVLSALINLGYKEAVVQKALAELKVTEDATVELVLKQALKILMK) are domain III.

Belongs to the RuvA family. Homotetramer. Forms an RuvA(8)-RuvB(12)-Holliday junction (HJ) complex. HJ DNA is sandwiched between 2 RuvA tetramers; dsDNA enters through RuvA and exits via RuvB. An RuvB hexamer assembles on each DNA strand where it exits the tetramer. Each RuvB hexamer is contacted by two RuvA subunits (via domain III) on 2 adjacent RuvB subunits; this complex drives branch migration. In the full resolvosome a probable DNA-RuvA(4)-RuvB(12)-RuvC(2) complex forms which resolves the HJ.

Its subcellular location is the cytoplasm. Its function is as follows. The RuvA-RuvB-RuvC complex processes Holliday junction (HJ) DNA during genetic recombination and DNA repair, while the RuvA-RuvB complex plays an important role in the rescue of blocked DNA replication forks via replication fork reversal (RFR). RuvA specifically binds to HJ cruciform DNA, conferring on it an open structure. The RuvB hexamer acts as an ATP-dependent pump, pulling dsDNA into and through the RuvAB complex. HJ branch migration allows RuvC to scan DNA until it finds its consensus sequence, where it cleaves and resolves the cruciform DNA. This is Holliday junction branch migration complex subunit RuvA from Geobacter sp. (strain M21).